The primary structure comprises 488 residues: Wax ester synthase/diacylglycerol acyltransferase 8 (488 aa).

The Cytoplasmic portion of the chain corresponds to 1 to 195 (MKNEEEEPLS…AIFTIGSTMR (195 aa)). His135 serves as the catalytic Proton acceptor. A helical membrane pass occupies residues 196–214 (LIWNTLVDMFLLFATMLFL). At 215–488 (KDTKTPLKGG…RGLLKEAYKV (274 aa)) the chain is on the lumenal side. Asn238, Asn252, Asn353, and Asn397 each carry an N-linked (GlcNAc...) asparagine glycan.

The protein in the N-terminal section; belongs to the long-chain O-acyltransferase family. In terms of tissue distribution, mostly expressed in flowers and siliques and at low levels in stems.

It is found in the cell membrane. The protein localises to the endoplasmic reticulum membrane. It carries out the reaction an acyl-CoA + a 1,2-diacyl-sn-glycerol = a triacyl-sn-glycerol + CoA. The enzyme catalyses a long chain fatty alcohol + a fatty acyl-CoA = a wax ester + CoA. It participates in glycerolipid metabolism; triacylglycerol biosynthesis. Its pathway is lipid metabolism. Its function is as follows. Bifunctional wax ester synthase/diacylglycerol acyltransferase. Involved in cuticular wax biosynthesis. The protein is Wax ester synthase/diacylglycerol acyltransferase 8 of Arabidopsis thaliana (Mouse-ear cress).